Consider the following 270-residue polypeptide: Ribosomal RNA small subunit methyltransferase J (270 aa).

Residues 126-127 (ER) and aspartate 182 contribute to the S-adenosyl-L-methionine site.

This sequence belongs to the methyltransferase superfamily. RsmJ family.

Its subcellular location is the cytoplasm. The enzyme catalyses guanosine(1516) in 16S rRNA + S-adenosyl-L-methionine = N(2)-methylguanosine(1516) in 16S rRNA + S-adenosyl-L-homocysteine + H(+). Functionally, specifically methylates the guanosine in position 1516 of 16S rRNA. The protein is Ribosomal RNA small subunit methyltransferase J of Acinetobacter baylyi (strain ATCC 33305 / BD413 / ADP1).